Consider the following 418-residue polypeptide: Probable carboxypeptidase AFLA_000940 (418 aa).

The first 18 residues, Met-1–Ala-18, serve as a signal peptide directing secretion. Asn-74 carries an N-linked (GlcNAc...) asparagine glycan. A Zn(2+)-binding site is contributed by Asp-147. A glycan (N-linked (GlcNAc...) asparagine) is linked at Asn-168. The active-site Proton acceptor is the Glu-179. Glu-180 serves as a coordination point for Zn(2+).

This sequence belongs to the peptidase M20A family. Zn(2+) serves as cofactor.

Its subcellular location is the secreted. The chain is Probable carboxypeptidase AFLA_000940 from Aspergillus flavus (strain ATCC 200026 / FGSC A1120 / IAM 13836 / NRRL 3357 / JCM 12722 / SRRC 167).